A 130-amino-acid chain; its full sequence is uncharacterized protein (130 aa).

This is an uncharacterized protein from Schizosaccharomyces pombe (strain 972 / ATCC 24843) (Fission yeast).